The following is a 426-amino-acid chain: Serine--tRNA ligase (426 aa).

Residue 230–232 (TSE) coordinates L-serine. Position 261–263 (261–263 (RKE)) interacts with ATP. Residue Glu-284 coordinates L-serine. An ATP-binding site is contributed by 348–351 (EISS). Ser-385 is a binding site for L-serine.

It belongs to the class-II aminoacyl-tRNA synthetase family. Type-1 seryl-tRNA synthetase subfamily. Homodimer. The tRNA molecule binds across the dimer.

It localises to the cytoplasm. The catalysed reaction is tRNA(Ser) + L-serine + ATP = L-seryl-tRNA(Ser) + AMP + diphosphate + H(+). It catalyses the reaction tRNA(Sec) + L-serine + ATP = L-seryl-tRNA(Sec) + AMP + diphosphate + H(+). It functions in the pathway aminoacyl-tRNA biosynthesis; selenocysteinyl-tRNA(Sec) biosynthesis; L-seryl-tRNA(Sec) from L-serine and tRNA(Sec): step 1/1. Its function is as follows. Catalyzes the attachment of serine to tRNA(Ser). Is also able to aminoacylate tRNA(Sec) with serine, to form the misacylated tRNA L-seryl-tRNA(Sec), which will be further converted into selenocysteinyl-tRNA(Sec). This Wolbachia pipientis subsp. Culex pipiens (strain wPip) protein is Serine--tRNA ligase.